We begin with the raw amino-acid sequence, 383 residues long: Succinyl-diaminopimelate desuccinylase (383 aa).

Histidine 79 is a binding site for Zn(2+). The active site involves aspartate 81. Aspartate 110 contributes to the Zn(2+) binding site. Catalysis depends on glutamate 141, which acts as the Proton acceptor. Zn(2+)-binding residues include glutamate 142, glutamate 170, and histidine 355.

It belongs to the peptidase M20A family. DapE subfamily. Homodimer. It depends on Zn(2+) as a cofactor. Co(2+) serves as cofactor.

It catalyses the reaction N-succinyl-(2S,6S)-2,6-diaminopimelate + H2O = (2S,6S)-2,6-diaminopimelate + succinate. Its pathway is amino-acid biosynthesis; L-lysine biosynthesis via DAP pathway; LL-2,6-diaminopimelate from (S)-tetrahydrodipicolinate (succinylase route): step 3/3. Functionally, catalyzes the hydrolysis of N-succinyl-L,L-diaminopimelic acid (SDAP), forming succinate and LL-2,6-diaminopimelate (DAP), an intermediate involved in the bacterial biosynthesis of lysine and meso-diaminopimelic acid, an essential component of bacterial cell walls. The polypeptide is Succinyl-diaminopimelate desuccinylase (Helicobacter pylori (strain ATCC 700392 / 26695) (Campylobacter pylori)).